Reading from the N-terminus, the 455-residue chain is F-box/FBD/LRR-repeat protein At3g51530 (455 aa).

The disordered stretch occupies residues 1 to 26 (MKNSERFSAAKPLMEQGGKSSRKPGF). Residues 29-75 (EDRISELPEVLLLQILSSLPTKLVISTSVLSKRWLSLWKMVQRLEFE) form the F-box domain. LRR repeat units lie at residues 80-106 (IYDF…HLKV), 155-182 (ETLK…HLLS), 183-208 (VVYK…VLRR), 227-257 (TLLL…GIES), 277-302 (IRNV…SLDL), and 325-351 (THKV…KLID). One can recognise an FBD domain in the interval 370–417 (KWNQPKYVPECLETFMWRNCNWGREEEKEVATYILRNARQLKKATFST).

The protein is F-box/FBD/LRR-repeat protein At3g51530 of Arabidopsis thaliana (Mouse-ear cress).